We begin with the raw amino-acid sequence, 178 residues long: MKRERSDFEESLKNIDIAKCLMILAQTSMVKQIGLNQHTESHTSNQFECKTCNKRFSSFQALGGHRASHKKPKLTVEQKDVKHLSNDYKGNHFHKCSICSQSFGTGQALGGHMRRHRSSMTVEPSFISPMIPSMPVLKRCGSSKRILSLDLNLTPLENDLEYIFGKTFVPKIDMKFVL.

2 C2H2-type zinc fingers span residues 47-69 and 94-116; these read FECKTCNKRFSSFQALGGHRASH and HKCSICSQSFGTGQALGGHMRRH.

As to expression, expressed in leaves.

Its subcellular location is the nucleus. Functionally, probable transcription factor that may be involved in stress responses. The protein is Zinc finger protein ZAT11 (ZAT11) of Arabidopsis thaliana (Mouse-ear cress).